We begin with the raw amino-acid sequence, 79 residues long: MAQPDSSSLAEVLDRVLDKGVVVDVWARISLVGIEILTVEARVVAASVDTFLHYAEEIAKIEQAELTAGAEAPEPAPEA.

The interval 9-19 (LAEVLDRVLDK) is alpha helix 1. A beta-strand 1 region spans residues 23-31 (VDVWARISL). Residues 32–34 (VGI) form a beta turn region. Residues 35–43 (EILTVEARV) are beta-strand 2. The alpha helix 2 stretch occupies residues 48 to 67 (VDTFLHYAEEIAKIEQAELT).

It belongs to the gas vesicle GvpA family. The gas vesicle shell is 2 nm thick and consists of a single layer of this protein. It forms helical ribs nearly perpendicular to the long axis of the vesicle.

Its subcellular location is the gas vesicle shell. Its function is as follows. Gas vesicles are hollow, gas filled proteinaceous nanostructures found in several microbial planktonic microorganisms. They allow positioning of halobacteria at the optimal depth for growth in the poorly aerated shallow brine pools of their habitat. GvpA forms the gas vesicle shell. This protein can replace the p-gvpA gene in the p-vac locus and increases the critical collapse pressure (CCP) of hybrid gas vesicles from 0.66 MPa to 0.90 MPa. In stationary phase gas vesicles about 30 times more GvpA1 is found than GvpA2. Functionally, expression of 2 c-vac DNA fragments containing 2 divergently transcribed regions (gvpE-gvpF-gvpG-gvpH-gvpI-gvpJ-gvpK-gvpL-gvpM and gvpA-gvpC-gvpN-gvpO) allows H.volcanii to produce gas vesicles. All site-directed mutagenesis is tested in H.volcanii. This Halobacterium salinarum (strain ATCC 700922 / JCM 11081 / NRC-1) (Halobacterium halobium) protein is Gas vesicle protein A2.